The following is an 88-amino-acid chain: Phosphocarrier protein HPr (88 aa).

In terms of domain architecture, HPr spans 1 to 88 (MEKRDFHVVA…ETMKKEGLSE (88 aa)). The active-site Pros-phosphohistidine intermediate is the histidine 15. Position 46 is a phosphoserine; by HPrK/P (serine 46).

It belongs to the HPr family.

It is found in the cytoplasm. With respect to regulation, phosphorylation on Ser-46 inhibits the phosphoryl transfer from enzyme I to HPr. General (non sugar-specific) component of the phosphoenolpyruvate-dependent sugar phosphotransferase system (sugar PTS). This major carbohydrate active-transport system catalyzes the phosphorylation of incoming sugar substrates concomitantly with their translocation across the cell membrane. The phosphoryl group from phosphoenolpyruvate (PEP) is transferred to the phosphoryl carrier protein HPr by enzyme I. Phospho-HPr then transfers it to the PTS EIIA domain. In terms of biological role, P-Ser-HPr interacts with the catabolite control protein A (CcpA), forming a complex that binds to DNA at the catabolite response elements cre, operator sites preceding a large number of catabolite-regulated genes. Thus, P-Ser-HPr is a corepressor in carbon catabolite repression (CCR), a mechanism that allows bacteria to coordinate and optimize the utilization of available carbon sources. P-Ser-HPr also plays a role in inducer exclusion, in which it probably interacts with several non-PTS permeases and inhibits their transport activity. This chain is Phosphocarrier protein HPr (ptsH), found in Latilactobacillus sakei (Lactobacillus sakei).